The following is a 224-amino-acid chain: UPF0758 protein Noc_0236 (224 aa).

The 123-residue stretch at 102–224 (VLTDPQTTQR…TLSFAERGLL (123 aa)) folds into the MPN domain. Zn(2+) contacts are provided by H173, H175, and D186. The JAMM motif signature appears at 173 to 186 (HNHPSGVAEPSRAD).

Belongs to the UPF0758 family.

This chain is UPF0758 protein Noc_0236, found in Nitrosococcus oceani (strain ATCC 19707 / BCRC 17464 / JCM 30415 / NCIMB 11848 / C-107).